Reading from the N-terminus, the 436-residue chain is ATP-dependent RNA helicase RhlB (436 aa).

Positions 9–37 (QKFADLDLLPQVIEGLEKKGFDYCTPIQA) match the Q motif motif. The Helicase ATP-binding domain maps to 40–219 (LPVLLTGQDI…FEHMHNPEHV (180 aa)). 53-60 (AQTGTGKT) is a binding site for ATP. The short motif at 165–168 (DEAD) is the DEAD box element. In terms of domain architecture, Helicase C-terminal spans 245–390 (ALLQTLIEEE…MSDYDASALL (146 aa)). Positions 398-436 (RLRTRNPQQRRSNNNGPRNGNRKPNQNRRPRQPRHNKEA) are disordered. Residues 402 to 421 (RNPQQRRSNNNGPRNGNRKP) are compositionally biased toward low complexity. The span at 422–436 (NQNRRPRQPRHNKEA) shows a compositional bias: basic residues.

Belongs to the DEAD box helicase family. RhlB subfamily. Component of the RNA degradosome, which is a multiprotein complex involved in RNA processing and mRNA degradation.

Its subcellular location is the cytoplasm. It carries out the reaction ATP + H2O = ADP + phosphate + H(+). In terms of biological role, DEAD-box RNA helicase involved in RNA degradation. Has RNA-dependent ATPase activity and unwinds double-stranded RNA. In Vibrio atlanticus (strain LGP32) (Vibrio splendidus (strain Mel32)), this protein is ATP-dependent RNA helicase RhlB.